We begin with the raw amino-acid sequence, 156 residues long: N-glycosidase Npun_R5314 (156 aa).

It belongs to the YbiA family.

The catalysed reaction is 2,5-diamino-6-hydroxy-4-(5-phosphoribosylamino)-pyrimidine + H2O = 2,5,6-triamino-4-hydroxypyrimidine + D-ribose 5-phosphate. The enzyme catalyses 5-amino-6-(5-phospho-D-ribosylamino)uracil + H2O = 5,6-diaminouracil + D-ribose 5-phosphate. Its function is as follows. Catalyzes the hydrolysis of the N-glycosidic bond in the first two intermediates of riboflavin biosynthesis, which are highly reactive metabolites, yielding relatively innocuous products. Thus, can divert a surplus of harmful intermediates into relatively harmless products and pre-empt the damage these intermediates would otherwise do. May act on other substrates in vivo. Has no activity against GTP, nucleoside monophosphates or ADP-ribose. This Nostoc punctiforme (strain ATCC 29133 / PCC 73102) protein is N-glycosidase Npun_R5314.